The sequence spans 70 residues: ATP synthase subunit c (70 aa).

A run of 2 helical transmembrane segments spans residues 4 to 24 (IAAGIAMFGAALGAGIGNGLV) and 47 to 67 (FIGVGLIESMPIISFVVALMV).

It belongs to the ATPase C chain family. F-type ATPases have 2 components, F(1) - the catalytic core - and F(0) - the membrane proton channel. F(1) has five subunits: alpha(3), beta(3), gamma(1), delta(1), epsilon(1). F(0) has three main subunits: a(1), b(2) and c(10-14). The alpha and beta chains form an alternating ring which encloses part of the gamma chain. F(1) is attached to F(0) by a central stalk formed by the gamma and epsilon chains, while a peripheral stalk is formed by the delta and b chains.

The protein resides in the cell membrane. Functionally, f(1)F(0) ATP synthase produces ATP from ADP in the presence of a proton or sodium gradient. F-type ATPases consist of two structural domains, F(1) containing the extramembraneous catalytic core and F(0) containing the membrane proton channel, linked together by a central stalk and a peripheral stalk. During catalysis, ATP synthesis in the catalytic domain of F(1) is coupled via a rotary mechanism of the central stalk subunits to proton translocation. In terms of biological role, key component of the F(0) channel; it plays a direct role in translocation across the membrane. A homomeric c-ring of between 10-14 subunits forms the central stalk rotor element with the F(1) delta and epsilon subunits. The chain is ATP synthase subunit c from Lactiplantibacillus plantarum (strain ATCC BAA-793 / NCIMB 8826 / WCFS1) (Lactobacillus plantarum).